The following is a 142-amino-acid chain: uncharacterized protein (142 aa).

In terms of assembly, homodimer.

This is an uncharacterized protein from Bacillus subtilis (strain 168).